The primary structure comprises 490 residues: Cobyric acid synthase (490 aa).

The GATase cobBQ-type domain maps to 252–439 (RLKVVVPVLP…LHGLFESTAA (188 aa)). Cys333 acts as the Nucleophile in catalysis. Residue His431 is part of the active site.

It belongs to the CobB/CobQ family. CobQ subfamily.

It functions in the pathway cofactor biosynthesis; adenosylcobalamin biosynthesis. Its function is as follows. Catalyzes amidations at positions B, D, E, and G on adenosylcobyrinic A,C-diamide. NH(2) groups are provided by glutamine, and one molecule of ATP is hydrogenolyzed for each amidation. This chain is Cobyric acid synthase, found in Pseudomonas paraeruginosa (strain DSM 24068 / PA7) (Pseudomonas aeruginosa (strain PA7)).